The primary structure comprises 293 residues: TBC1 domain family member 7 (293 aa).

One can recognise a Rab-GAP TBC domain in the interval 50–231; it reads PLPSMYRALV…RVWDKVVSGS (182 aa).

As to quaternary structure, component of the TSC-TBC complex (also named Rhebulator complex), composed of 2 molecules of TSC1, 2 molecules of TSC2 and 1 molecule of TBC1D7. Interacts with TSC1 (via C-terminal half of the coiled-coil domain). Highly expressed in heart, and slightly in kidney, liver and placenta.

Its subcellular location is the lysosome membrane. The protein localises to the cytoplasmic vesicle. It is found in the cytoplasm. It localises to the cytosol. Its function is as follows. Non-catalytic component of the TSC-TBC complex, a multiprotein complex that acts as a negative regulator of the canonical mTORC1 complex, an evolutionarily conserved central nutrient sensor that stimulates anabolic reactions and macromolecule biosynthesis to promote cellular biomass generation and growth. The TSC-TBC complex acts as a GTPase-activating protein (GAP) for the small GTPase RHEB, a direct activator of the protein kinase activity of mTORC1. In absence of nutrients, the TSC-TBC complex inhibits mTORC1, thereby preventing phosphorylation of ribosomal protein S6 kinase (RPS6KB1 and RPS6KB2) and EIF4EBP1 (4E-BP1) by the mTORC1 signaling. The TSC-TBC complex is inactivated in response to nutrients, relieving inhibition of mTORC1. The protein is TBC1 domain family member 7 of Homo sapiens (Human).